We begin with the raw amino-acid sequence, 458 residues long: Chitin deacetylase 2 (458 aa).

An N-terminal signal peptide occupies residues Met-1–Ala-51. Asn-87, Asn-99, and Asn-125 each carry an N-linked (GlcNAc...) asparagine glycan. The region spanning Met-158–Pro-348 is the NodB homology domain. Asp-165 acts as the Proton acceptor in catalysis. Asp-165 contributes to the acetate binding site. Asp-166 contributes to the Co(2+) binding site. Asn-169 carries an N-linked (GlcNAc...) asparagine glycan. His-215 and His-219 together coordinate Co(2+). An acetate-binding site is contributed by Tyr-256. Residues Asn-271 and Asn-309 are each glycosylated (N-linked (GlcNAc...) asparagine). Catalysis depends on His-322, which acts as the Proton donor. Asn-326, Asn-354, Asn-363, Asn-378, and Asn-393 each carry an N-linked (GlcNAc...) asparagine glycan. Residues Ser-382 to Ala-430 are disordered. The GPI-anchor amidated serine moiety is linked to residue Ser-427. Positions Ser-428–Leu-458 are cleaved as a propeptide — removed in mature form. Asn-429 carries N-linked (GlcNAc...) asparagine glycosylation.

The protein belongs to the polysaccharide deacetylase family. Requires Co(2+) as cofactor. Post-translationally, glycosylated.

It is found in the secreted. Its subcellular location is the cell wall. The protein resides in the cell membrane. It catalyses the reaction [(1-&gt;4)-N-acetyl-beta-D-glucosaminyl](n) + n H2O = chitosan + n acetate. Functionally, hydrolyzes the N-acetamido groups of N-acetyl-D-glucosamine residues in chitin to form chitosan and acetate. Chitosan is required to anchor melanin to the cell wall, for maintenance of cell wall integrity, and for cytokinesis. This is Chitin deacetylase 2 from Cryptococcus neoformans var. neoformans serotype D (strain B-3501A) (Filobasidiella neoformans).